Here is a 1491-residue protein sequence, read N- to C-terminus: Chromosome partition protein MukB (1491 aa).

An ATP-binding site is contributed by G34–S41. 5 coiled-coil regions span residues L302–E450, A490–S600, R781–S806, E836–T1109, and V1210–D1239. The segment at P667–R784 is flexible hinge. A disordered region spans residues Q1059 to E1080.

It belongs to the SMC family. MukB subfamily. As to quaternary structure, homodimerization via its hinge domain. Binds to DNA via its C-terminal region. Interacts, and probably forms a ternary complex, with MukE and MukF via its C-terminal region. The complex formation is stimulated by calcium or magnesium. Interacts with tubulin-related protein FtsZ.

It localises to the cytoplasm. The protein localises to the nucleoid. In terms of biological role, plays a central role in chromosome condensation, segregation and cell cycle progression. Functions as a homodimer, which is essential for chromosome partition. Involved in negative DNA supercoiling in vivo, and by this means organize and compact chromosomes. May achieve or facilitate chromosome segregation by condensation DNA from both sides of a centrally located replisome during cell division. The polypeptide is Chromosome partition protein MukB (Vibrio cholerae serotype O1 (strain ATCC 39315 / El Tor Inaba N16961)).